Here is a 428-residue protein sequence, read N- to C-terminus: Involucrin (428 aa).

2 disordered regions span residues Met1–Lys128 and Lys140–Gln398. Basic and acidic residues predominate over residues Pro56–Glu76. Positions Gln77 to Gly92 are enriched in low complexity. 3 stretches are compositionally biased toward basic and acidic residues: residues Leu107–Gln117, Gln162–Glu174, and Gln192–Gln208. A compositionally biased stretch (low complexity) spans Gln209–Gln218. The segment covering Asp220–Gln297 has biased composition (basic and acidic residues). Positions Gln298–Gln311 are enriched in low complexity. 3 stretches are compositionally biased toward basic and acidic residues: residues Lys313–Gln327, Lys352–Gln366, and Gln374–Leu385.

This sequence belongs to the involucrin family. As to quaternary structure, directly or indirectly cross-linked to cornifelin (CNFN). Substrate of transglutaminase. Specific glutamines or lysines are cross-linked to keratins, desmoplakin and to inter involucrin molecules. As to expression, keratinocytes of epidermis and other stratified squamous epithelia.

The protein resides in the cytoplasm. Part of the insoluble cornified cell envelope (CE) of stratified squamous epithelia. This is Involucrin (IVL) from Cebus albifrons (White-fronted capuchin).